The primary structure comprises 217 residues: Probable GTP-binding protein EngB (217 aa).

The region spanning 31 to 205 (VGVEIAFAGR…LAILDAWCHP (175 aa)) is the EngB-type G domain. GTP-binding positions include 39-46 (GRSNAGKS), 66-70 (GRTQL), 84-87 (DLPG), 151-154 (TKAD), and 184-186 (FSA). The Mg(2+) site is built by serine 46 and threonine 68.

The protein belongs to the TRAFAC class TrmE-Era-EngA-EngB-Septin-like GTPase superfamily. EngB GTPase family. Mg(2+) serves as cofactor.

In terms of biological role, necessary for normal cell division and for the maintenance of normal septation. This is Probable GTP-binding protein EngB from Shewanella amazonensis (strain ATCC BAA-1098 / SB2B).